A 401-amino-acid polypeptide reads, in one-letter code: Exodeoxyribonuclease 7 large subunit (401 aa).

Belongs to the XseA family. In terms of assembly, heterooligomer composed of large and small subunits.

The protein localises to the cytoplasm. It carries out the reaction Exonucleolytic cleavage in either 5'- to 3'- or 3'- to 5'-direction to yield nucleoside 5'-phosphates.. In terms of biological role, bidirectionally degrades single-stranded DNA into large acid-insoluble oligonucleotides, which are then degraded further into small acid-soluble oligonucleotides. This Clostridium botulinum (strain Loch Maree / Type A3) protein is Exodeoxyribonuclease 7 large subunit.